The primary structure comprises 60 residues: Potassium channel toxin alpha-KTx 29.1 (60 aa).

The signal sequence occupies residues 1–28 (MKSVCGVLIILVVLTTMLSISTFSTVGA). 3 disulfide bridges follow: Cys-32–Cys-51, Cys-40–Cys-56, and Cys-44–Cys-58.

Belongs to the short scorpion toxin superfamily. Potassium channel inhibitor family. Alpha-KTx 29 subfamily. Expressed by the venom gland.

It localises to the secreted. Weakly inhibits the Kv1.3/KCNA3 channel (1 uM of the toxin inhibits currents by 13.2%) and Kv7.1/KCNQ1 channel (10 uM of the toxin inhibits currents by 27.7%). The sequence is that of Potassium channel toxin alpha-KTx 29.1 from Lychas mucronatus (Chinese swimming scorpion).